A 78-amino-acid polypeptide reads, in one-letter code: MKLIIFTGLALLLIVSLIDVEAQNEGACLPRGSVCTTNHASCCSKLSCDCYRRFEKGVEKGQKCWCIPTGLRYSKEKE.

A signal peptide spans 1–22; sequence MKLIIFTGLALLLIVSLIDVEA. Positions 23-26 are excised as a propeptide; that stretch reads QNEG.

It belongs to the neurotoxin 19 (CSTX) family. 07 (U7-Lctx) subfamily. Contains 4 disulfide bonds. As to expression, expressed by the venom gland.

It localises to the secreted. The chain is U7-lycotoxin-Ls1e from Lycosa singoriensis (Wolf spider).